A 489-amino-acid polypeptide reads, in one-letter code: Tripartite motif-containing protein 10 (489 aa).

An RING-type zinc finger spans residues 16–61; that stretch reads CPICQGTLREPVTIDCGHNFCRGCLTRYCEIPGPESEESLSCPLCK. The B box-type zinc-finger motif lies at 94–135; sequence EVEDACPEHGEKIYFFCEEDEAQLCVVCRETGQHGAHTVRFL. The Zn(2+) site is built by C99, H102, C121, and H127. Residues 144–180 are a coiled coil; that stretch reads EQIQKCLVCLRKEREEIQETQSRENKRIQVLLTQVAT. Residues 292-486 form the B30.2/SPRY domain; the sequence is QEMKTFLEKL…FSLSCQEGAV (195 aa).

The protein belongs to the TRIM/RBCC family. Interacts with IFNAR1; this interaction prevents association of IFNAR1 with TYK2. As to expression, expressed in embryonic liver.

The protein localises to the cytoplasm. Functionally, E3 ligase that plays an essential role in the differentiation and survival of terminal erythroid cells. May directly bind to PTEN and promote its ubiquitination, resulting in its proteasomal degradation and activation of hypertrophic signaling. In addition, plays a role in immune response regulation by repressing the phosphorylation of STAT1 and STAT2 in the interferon/JAK/STAT signaling pathway independent of its E3 ligase activity. Mechanistically, interacts with the intracellular domain of IFNAR1 and thereby inhibits the association between TYK2 and IFNAR1. The sequence is that of Tripartite motif-containing protein 10 (Trim10) from Mus musculus (Mouse).